The sequence spans 258 residues: Triosephosphate isomerase (258 aa).

9–11 (NWK) lines the substrate pocket. Residue His105 is the Electrophile of the active site. Catalysis depends on Glu176, which acts as the Proton acceptor. 2 residues coordinate substrate: Gly182 and Ser214.

This sequence belongs to the triosephosphate isomerase family. In terms of assembly, homodimer.

The protein localises to the cytoplasm. The catalysed reaction is D-glyceraldehyde 3-phosphate = dihydroxyacetone phosphate. Its pathway is carbohydrate biosynthesis; gluconeogenesis. It participates in carbohydrate degradation; glycolysis; D-glyceraldehyde 3-phosphate from glycerone phosphate: step 1/1. Functionally, involved in the gluconeogenesis. Catalyzes stereospecifically the conversion of dihydroxyacetone phosphate (DHAP) to D-glyceraldehyde-3-phosphate (G3P). The chain is Triosephosphate isomerase from Mycoplasmopsis agalactiae (strain NCTC 10123 / CIP 59.7 / PG2) (Mycoplasma agalactiae).